Consider the following 209-residue polypeptide: rRNA N(6)-adenosine-methyltransferase METTL5 (209 aa).

S-adenosyl-L-methionine is bound by residues glutamine 28, threonine 31, glycine 59, cysteine 62, valine 64, aspartate 81, and 108–109 (DV).

It belongs to the methyltransferase superfamily. PrmA family. As to quaternary structure, heterodimer; heterodimerizes with TRMT112. In terms of tissue distribution, expressed from very early development (8 post-conceptual weeks) and expression persists through adulthood in multiple substructures of the brain, including the cerebellar cortex, hippocampus, and striatum.

It is found in the nucleus. It localises to the presynapse. Its subcellular location is the postsynapse. The catalysed reaction is adenosine(1832) in 18S rRNA + S-adenosyl-L-methionine = N(6)-methyladenosine(1832) in 18S rRNA + S-adenosyl-L-homocysteine + H(+). With respect to regulation, rRNA N6-adenosine-methyltransferase activity is inhibited by zinc. Its function is as follows. Catalytic subunit of a heterodimer with TRMT112, which specifically methylates the 6th position of adenine in position 1832 of 18S rRNA. N6-methylation of adenine(1832) in 18S rRNA resides in the decoding center of 18S rRNA and is required for translation and embryonic stem cells (ESCs) pluripotency and differentiation. The sequence is that of rRNA N(6)-adenosine-methyltransferase METTL5 from Homo sapiens (Human).